An 809-amino-acid chain; its full sequence is Endoplasmin homolog (809 aa).

The N-terminal stretch at 1–18 (MRKWALSCALLLVLLLTT) is a signal peptide. ATP contacts are provided by asparagine 111, aspartate 155, asparagine 168, and phenylalanine 200. An N-linked (GlcNAc...) asparagine glycan is attached at asparagine 111. A compositionally biased stretch (acidic residues) spans 293–320 (VPADEEESNEEEESTTETTEEEETEDDE). Residues 293-329 (VPADEEESNEEEESTTETTEEEETEDDEEKKPKTKTV) form a disordered region. N-linked (GlcNAc...) asparagine glycosylation is found at asparagine 410, asparagine 450, and asparagine 617. The tract at residues 766 to 809 (SLDLSPDAAVEEEEEVEEPEVEEKESAKQEAEEPEHEQYDKDEL) is disordered. The span at 774–788 (AVEEEEEVEEPEVEE) shows a compositional bias: acidic residues. Basic and acidic residues predominate over residues 789-809 (KESAKQEAEEPEHEQYDKDEL). The Prevents secretion from ER signature appears at 806–809 (KDEL).

This sequence belongs to the heat shock protein 90 family.

The protein resides in the endoplasmic reticulum lumen. May have a molecular chaperone role in the processing of secreted materials. This Hordeum vulgare (Barley) protein is Endoplasmin homolog.